The sequence spans 685 residues: Mesothelin-like protein (685 aa).

Residues 1–32 (MSRTLRPSAMGSRVGALASPGLALLLSLTAHC) form the signal peptide. At 33–627 (SGPQAKGLPK…GVSHTSGSPP (595 aa)) the chain is on the extracellular side. N-linked (GlcNAc...) asparagine glycosylation is found at Asn315 and Asn400. A disordered region spans residues 603–624 (PPSSLIHSLDPPGNDGVSHTSG). Residues 628–648 (VHLGYLSLAVALPSSLLWLLL) form a helical membrane-spanning segment. Topologically, residues 649 to 685 (CQLPSGQMATAHRTLGPMALAQGSWTPEHQIPEKRSC) are cytoplasmic.

Belongs to the mesothelin family.

It localises to the membrane. In terms of biological role, may play a role in cellular adhesion. In Mus musculus (Mouse), this protein is Mesothelin-like protein (Mslnl).